The sequence spans 282 residues: Phosphoglucan phosphatase LSF2, chloroplastic (282 aa).

The N-terminal 61 residues, 1-61, are a transit peptide targeting the chloroplast; the sequence is MSVIGSKSCI…GENPGTNGVS (61 aa). Residues tyrosine 83, 153–156, aspartate 161, and 177–180 each bind substrate; these read RHMR and SLEW. The region spanning 92–249 is the Tyrosine-protein phosphatase domain; the sequence is NYTLIRDELI…TYDLAKNDPW (158 aa). Residue cysteine 193 is the Phosphocysteine intermediate of the active site. Residues 193 to 199 carry the Glucan phosphatase signature motif CXAGXGR motif; sequence CSAGLGR. Residues 194–199, glycine 230, lysine 245, glutamate 251, 259–263, and glutamate 268 contribute to the substrate site; these read SAGLGR and NAFED.

As to expression, widely expressed.

The protein localises to the plastid. It localises to the chloroplast. Its function is as follows. Starch-associated phosphoglucan phosphatase that selectively dephosphorylates the glucan C3 position. Probably participates in the regulation of starch degradation. This Arabidopsis thaliana (Mouse-ear cress) protein is Phosphoglucan phosphatase LSF2, chloroplastic (LSF2).